Here is a 231-residue protein sequence, read N- to C-terminus: Eukaryotic translation initiation factor 4E-1 (231 aa).

EIF4G-binding stretches follow at residues 56 to 59 (HPLE) and 66 to 102 (FDNPTTKSRQTAWGSSLRNVYTFSTVEDFWGAYNNIH). Residues 74–79 (RQTAWG), lysine 106, and 124–125 (WE) contribute to the mRNA site. A disulfide bridge connects residues cysteine 129 and cysteine 167. Positions 150–159 (YTLLAMIGHQ) are EIF4G-binding. MRNA-binding positions include 174 to 179 (RAKGEK) and 219 to 223 (KRLDR).

This sequence belongs to the eukaryotic initiation factor 4E family. EIF4F is a multi-subunit complex, the composition of which varies with external and internal environmental conditions. It is composed of at least EIF4A, EIF4E and EIF4G. EIF4E is also known to interact with other partners. In higher plants two isoforms of EIF4F have been identified, named isoform EIF4F and isoform EIF(iso)4F. Isoform EIF4F has subunits p220 and p26, whereas isoform EIF(iso)4F has subunits p82 and p28. In terms of assembly, (Microbial infection) Interacts with potyvirus viral genome-linked protein (VPg); mostly with tobacco etch virus (TEV-HAT) VPg and, to a lower extent, with potato virus Y (PVY-LYE84 and PVY-LYE90) and pepper mottle virus (PepMoV) VPg. According to the redox status, the Cys-129-Cys-167 disulfide bridge may have a role in regulating protein function by affecting its ability to bind capped mRNA.

Its subcellular location is the nucleus. It localises to the cytoplasm. Component of the protein complex eIF4F, which is involved in the recognition of the mRNA cap, ATP-dependent unwinding of 5'-terminal secondary structure and recruitment of mRNA to the ribosome. Recognizes and binds the 7-methylguanosine-containing mRNA cap during an early step in the initiation of protein synthesis and facilitates ribosome binding by inducing the unwinding of the mRNAs secondary structures. Key component of recessive resistance to potyviruses. Functionally, (Microbial infection) Susceptibility host factor required for viral infection (e.g. potato virus Y (PVY), pepper mottle virus (PepMoV) and tobacco etch virus (TEV)) by recruiting viral RNAs to the host ribosomal complex via an interaction with viral genome-linked protein (VPg). This chain is Eukaryotic translation initiation factor 4E-1, found in Solanum lycopersicum (Tomato).